We begin with the raw amino-acid sequence, 78 residues long: UPF0335 protein A1C_00850 (78 aa).

This sequence belongs to the UPF0335 family.

This Rickettsia akari (strain Hartford) protein is UPF0335 protein A1C_00850.